We begin with the raw amino-acid sequence, 495 residues long: Phosphomethylpyrimidine synthase (495 aa).

Substrate-binding positions include asparagine 125, methionine 154, tyrosine 183, histidine 219, 239–241, 280–283, and glutamate 319; these read SRG and DGLR. Residue histidine 323 participates in Zn(2+) binding. A substrate-binding site is contributed by tyrosine 346. Histidine 387 serves as a coordination point for Zn(2+). Positions 467, 470, and 475 each coordinate [4Fe-4S] cluster.

Belongs to the ThiC family. The cofactor is [4Fe-4S] cluster.

The catalysed reaction is 5-amino-1-(5-phospho-beta-D-ribosyl)imidazole + S-adenosyl-L-methionine = 4-amino-2-methyl-5-(phosphooxymethyl)pyrimidine + CO + 5'-deoxyadenosine + formate + L-methionine + 3 H(+). It functions in the pathway cofactor biosynthesis; thiamine diphosphate biosynthesis. Functionally, catalyzes the synthesis of the hydroxymethylpyrimidine phosphate (HMP-P) moiety of thiamine from aminoimidazole ribotide (AIR) in a radical S-adenosyl-L-methionine (SAM)-dependent reaction. In Leptospira interrogans serogroup Icterohaemorrhagiae serovar Lai (strain 56601), this protein is Phosphomethylpyrimidine synthase.